Consider the following 329-residue polypeptide: Anthranilate phosphoribosyltransferase (329 aa).

Residues glycine 78, 81 to 82 (GD), 88 to 91 (NLST), 106 to 114 (KHGNRAASS), and serine 118 contribute to the 5-phospho-alpha-D-ribose 1-diphosphate site. An anthranilate-binding site is contributed by glycine 78. Serine 90 is a binding site for Mg(2+). Asparagine 109 lines the anthranilate pocket. Arginine 164 serves as a coordination point for anthranilate. The Mg(2+) site is built by aspartate 221 and glutamate 222.

Belongs to the anthranilate phosphoribosyltransferase family. As to quaternary structure, homodimer. Mg(2+) serves as cofactor.

The catalysed reaction is N-(5-phospho-beta-D-ribosyl)anthranilate + diphosphate = 5-phospho-alpha-D-ribose 1-diphosphate + anthranilate. Its pathway is amino-acid biosynthesis; L-tryptophan biosynthesis; L-tryptophan from chorismate: step 2/5. Its function is as follows. Catalyzes the transfer of the phosphoribosyl group of 5-phosphorylribose-1-pyrophosphate (PRPP) to anthranilate to yield N-(5'-phosphoribosyl)-anthranilate (PRA). The chain is Anthranilate phosphoribosyltransferase from Thermus thermophilus (strain ATCC BAA-163 / DSM 7039 / HB27).